A 313-amino-acid polypeptide reads, in one-letter code: Protein TIFY 4A (313 aa).

Positions 118–149 (SPRSAEFSGGSGHFVSEKDGHKTTISPRSPAE) are disordered. In terms of domain architecture, Tify spans 150 to 185 (TSELVGQMTIFYSGKVNVYDGIPPEKARSIMHFAAN). 2 disordered regions span residues 220–256 (KANS…KAKK) and 281–313 (QNLG…SEGI). The Jas signature appears at 232–254 (QANRKVSLQRYREKRKDRKFSKA). The Nuclear localization signal motif lies at 234-241 (NRKVSLQR). Residues 243 to 256 (REKRKDRKFSKAKK) show a composition bias toward basic residues.

Belongs to the TIFY/JAZ family. As to quaternary structure, interacts with AFPH2/NINJA.

It localises to the nucleus. Its function is as follows. Regulates the arrest of dispersed meristematic cells during lamina development. This chain is Protein TIFY 4A (TIFY4A), found in Arabidopsis thaliana (Mouse-ear cress).